A 364-amino-acid chain; its full sequence is Tubulin alpha-2 chain (364 aa).

GTP-binding residues include glycine 59, threonine 60, threonine 94, asparagine 121, and asparagine 144. Residue glutamate 170 is part of the active site.

This sequence belongs to the tubulin family. In terms of assembly, dimer of alpha and beta chains. A typical microtubule is a hollow water-filled tube with an outer diameter of 25 nm and an inner diameter of 15 nM. Alpha-beta heterodimers associate head-to-tail to form protofilaments running lengthwise along the microtubule wall with the beta-tubulin subunit facing the microtubule plus end conferring a structural polarity. Microtubules usually have 13 protofilaments but different protofilament numbers can be found in some organisms and specialized cells. Mg(2+) is required as a cofactor. In terms of processing, undergoes a tyrosination/detyrosination cycle, the cyclic removal and re-addition of a C-terminal tyrosine residue by the enzymes tubulin tyrosine carboxypeptidase (TTCP) and tubulin tyrosine ligase (TTL), respectively.

It localises to the cytoplasm. It is found in the cytoskeleton. The catalysed reaction is GTP + H2O = GDP + phosphate + H(+). Its function is as follows. Tubulin is the major constituent of microtubules, a cylinder consisting of laterally associated linear protofilaments composed of alpha- and beta-tubulin heterodimers. Microtubules grow by the addition of GTP-tubulin dimers to the microtubule end, where a stabilizing cap forms. Below the cap, tubulin dimers are in GDP-bound state, owing to GTPase activity of alpha-tubulin. In Anemia phyllitidis (Fern), this protein is Tubulin alpha-2 chain (TUBA2).